Here is an 852-residue protein sequence, read N- to C-terminus: Leucine--tRNA ligase (852 aa).

Positions 41–51 (PYPSGRIHIGH) match the 'HIGH' region motif. Residues 623–627 (KMSKS) carry the 'KMSKS' region motif. Position 626 (K626) interacts with ATP.

It belongs to the class-I aminoacyl-tRNA synthetase family.

It is found in the cytoplasm. It catalyses the reaction tRNA(Leu) + L-leucine + ATP = L-leucyl-tRNA(Leu) + AMP + diphosphate. The polypeptide is Leucine--tRNA ligase (Ruegeria pomeroyi (strain ATCC 700808 / DSM 15171 / DSS-3) (Silicibacter pomeroyi)).